The primary structure comprises 199 residues: Inner membrane-spanning protein YciB (199 aa).

The next 6 membrane-spanning stretches (helical) occupy residues 7–27 (HPLF…AANA), 32–52 (FVAT…SYVV), 56–76 (IPLM…LTLV), 93–113 (LFAG…AIMF), 126–146 (VLTL…ELIW), and 153–173 (FWVN…AMMQ).

Belongs to the YciB family.

It is found in the cell inner membrane. In terms of biological role, plays a role in cell envelope biogenesis, maintenance of cell envelope integrity and membrane homeostasis. The polypeptide is Inner membrane-spanning protein YciB (Nitrobacter hamburgensis (strain DSM 10229 / NCIMB 13809 / X14)).